The sequence spans 748 residues: E3 ubiquitin-protein ligase SMURF2 (748 aa).

One can recognise a C2 domain in the interval 1 to 119; that stretch reads MSNPGGRRNG…TGYQRLDLCK (119 aa). K119 is covalently cross-linked (Glycyl lysine isopeptide (Lys-Gly) (interchain with G-Cter in ubiquitin)). 3 WW domains span residues 157–190, 251–284, and 297–330; these read NDLP…RPTR, PDLP…DPRV, and GPLP…DPRL. The 335-residue stretch at 414–748 folds into the HECT domain; that stretch reads RPKDLWKRLM…IEETCGFAVE (335 aa). Residue C716 is the Glycyl thioester intermediate of the active site.

In terms of assembly, interacts (via WW domains) with SMAD1. Interacts (via WW domains) with SMAD2 (via PY-motif). Interacts (via WW domains) with SMAD3 (via PY-motif). Interacts with SMAD6. Interacts with SMAD7 (via PY-motif) and TGFBR1; SMAD7 recruits SMURF2 to the TGF-beta receptor and regulates its degradation. Does not interact with SMAD4; SMAD4 lacks a PY-motif. Interacts with AIMP1. Interacts with SNON. Interacts with STAMBP and RNF11. May interact with NDFIP1 and NDFIP2; this interaction induces the E3 ubiquitin-protein ligase activity. Interacts with TTC3. As to quaternary structure, (Microbial infection) Interacts (via WW domains) with EBOV and MARV VP40 (via PPXY motif); the interaction facilitates VP40 virus-like particle budding. Post-translationally, auto-ubiquitinated and ubiquitinated in the presence of RNF11 and UBE2D1. Ubiquitinated by the SCF(FBXL15) complex and TTC3, leading to its degradation by the proteasome. 'Lys-48'-linked polyubiquitination mediated by TRAF4 at Lys-119 leads to SMURF2 proteasomal degradation. As to expression, widely expressed.

It is found in the nucleus. It localises to the cytoplasm. The protein resides in the cell membrane. Its subcellular location is the membrane raft. It carries out the reaction S-ubiquitinyl-[E2 ubiquitin-conjugating enzyme]-L-cysteine + [acceptor protein]-L-lysine = [E2 ubiquitin-conjugating enzyme]-L-cysteine + N(6)-ubiquitinyl-[acceptor protein]-L-lysine.. Its pathway is protein modification; protein ubiquitination. Its activity is regulated as follows. Activated by NDFIP1- and NDFIP2-binding. In terms of biological role, E3 ubiquitin-protein ligase which accepts ubiquitin from an E2 ubiquitin-conjugating enzyme in the form of a thioester and then directly transfers the ubiquitin to targeted substrates. Interacts with SMAD7 to trigger SMAD7-mediated transforming growth factor beta/TGF-beta receptor ubiquitin-dependent degradation, thereby down-regulating TGF-beta signaling. In addition, interaction with SMAD7 activates autocatalytic degradation, which is prevented by interaction with AIMP1. Also forms a stable complex with TGF-beta receptor-mediated phosphorylated SMAD1, SMAD2 and SMAD3, and targets SMAD1 and SMAD2 for ubiquitination and proteasome-mediated degradation. SMAD2 may recruit substrates, such as SNON, for ubiquitin-dependent degradation. Negatively regulates TGFB1-induced epithelial-mesenchymal transition and myofibroblast differentiation. Its function is as follows. (Microbial infection) In case of filoviruses Ebola/EBOV and Marburg/MARV infection, the complex formed by viral matrix protein VP40 and SMURF2 facilitates virus budding. This is E3 ubiquitin-protein ligase SMURF2 from Homo sapiens (Human).